The sequence spans 59 residues: Large ribosomal subunit protein uL30 (59 aa).

The protein belongs to the universal ribosomal protein uL30 family. Part of the 50S ribosomal subunit.

This Actinobacillus pleuropneumoniae serotype 7 (strain AP76) protein is Large ribosomal subunit protein uL30.